The following is a 119-amino-acid chain: Large ribosomal subunit protein bL20 (119 aa).

This sequence belongs to the bacterial ribosomal protein bL20 family.

In terms of biological role, binds directly to 23S ribosomal RNA and is necessary for the in vitro assembly process of the 50S ribosomal subunit. It is not involved in the protein synthesizing functions of that subunit. The polypeptide is Large ribosomal subunit protein bL20 (Shewanella woodyi (strain ATCC 51908 / MS32)).